We begin with the raw amino-acid sequence, 239 residues long: uncharacterized protein (239 aa).

The interval 129 to 155 (DSLDDEDDNMISSNDPTKSPEEHDTTT) is disordered. At Ser160 the chain carries Phosphoserine.

This is an uncharacterized protein from Schizosaccharomyces pombe (strain 972 / ATCC 24843) (Fission yeast).